The primary structure comprises 4555 residues: Protocadherin Fat 3 (4555 aa).

The first 31 residues, 1-31, serve as a signal peptide directing secretion; it reads MSVTMGHCMGTKPPSCIILLLLKLFATVSQG. The Extracellular segment spans residues 32 to 4153; sequence LPGTGPLGFH…AGHSYVGKEE (4122 aa). Cadherin domains follow at residues 43–157, 158–262, 263–374, 376–471, 472–577, 578–680, 726–830, 831–935, 936–1042, 1043–1147, 1148–1253, 1254–1358, 1362–1459, 1460–1565, 1566–1768, 1769–1882, 1883–1985, 1982–2083, 2084–2185, 2186–2286, 2287–2393, 2394–2495, 2496–2599, 2600–2707, 2708–2813, 2814–2923, 2924–3028, 3029–3130, 3131–3235, 3236–3340, 3341–3445, 3446–3550, and 3551–3660; these read THST…RPLF, SPTT…NEHA, PIIH…TPVR, EKDV…TPEF, QEAL…SPLF, EKVA…SKSF, KSFP…NPVF, LQDS…SPAF, IPSS…TPYF, PDFA…APLT, SEPI…RPQF, PEKV…SPIP, DEPF…GPEF, SQPH…SPYF, TNPL…PPVF, LFSQ…PPVF, TQAV…TQSF, TQSF…SPVF, VGLP…MPVF, DKPF…PPVF, DQPT…PPVF, NQLI…SPAF, SQST…APQF, MTVE…LPSF, TQSQ…KPVF, ETST…APVF, AHEV…SPVC, DQVA…PPVF, SSNH…PPVF, ERRD…PPRF, SQDV…SPVF, TPAN…KPTA, and IPLE…PEDF. A glycan (N-linked (GlcNAc...) asparagine) is linked at Asn-48. The N-linked (GlcNAc...) asparagine glycan is linked to Asn-341. N-linked (GlcNAc...) asparagine glycans are attached at residues Asn-481, Asn-562, Asn-667, Asn-799, Asn-879, Asn-898, and Asn-1006. N-linked (GlcNAc...) asparagine glycosylation is found at Asn-1367 and Asn-1429. Asn-1751 is a glycosylation site (N-linked (GlcNAc...) asparagine). N-linked (GlcNAc...) asparagine glycosylation is found at Asn-1944, Asn-1993, and Asn-1996. 4 N-linked (GlcNAc...) asparagine glycosylation sites follow: Asn-2208, Asn-2292, Asn-2331, and Asn-2467. Residue Asn-2734 is glycosylated (N-linked (GlcNAc...) asparagine). N-linked (GlcNAc...) asparagine glycosylation is present at Asn-3000. An N-linked (GlcNAc...) asparagine glycan is attached at Asn-3201. N-linked (GlcNAc...) asparagine glycosylation is found at Asn-3449, Asn-3618, and Asn-3741. In terms of domain architecture, EGF-like 1 spans 3794-3832; the sequence is SNDPCVEKPCPEDMQCVGYEASRRPFLCQCPPGKLGECS. Intrachain disulfides connect Cys-3798–Cys-3809, Cys-3803–Cys-3821, and Cys-3823–Cys-3831. In terms of domain architecture, Laminin G-like spans 3834 to 4017; it reads HTSLSFAGNS…VGLTELKLGC (184 aa). N-linked (GlcNAc...) asparagine glycosylation is present at Asn-3926. Intrachain disulfides connect Cys-3984–Cys-4017, Cys-4024–Cys-4035, Cys-4029–Cys-4045, Cys-4047–Cys-4056, Cys-4063–Cys-4074, Cys-4068–Cys-4083, Cys-4085–Cys-4094, Cys-4101–Cys-4112, Cys-4106–Cys-4121, and Cys-4123–Cys-4132. EGF-like domains are found at residues 4020–4057 and 4059–4095; these read YPDA…TNCE and EITA…VTCE. In terms of domain architecture, EGF-like 4; calcium-binding spans 4097–4133; that stretch reads DVDECEREECENGGSCVNLFGSFFCNCTPGYVGQYCG. The chain crosses the membrane as a helical span at residues 4154-4174; it reads LIGIAVVLFVIFTLIVLFIVF. At 4175–4555 the chain is on the cytoplasmic side; that stretch reads RKKVFRKNYS…FVETQQQTQV (381 aa). Disordered regions lie at residues 4300–4353 and 4395–4474; these read IRKN…YHWD and GGYD…LGGP. A compositionally biased stretch (polar residues) spans 4322 to 4343; it reads CFTNSNKGSNSEVQSLSSFQSD. An omega-N-methylarginine mark is found at Arg-4508 and Arg-4518.

In terms of tissue distribution, restricted to the nervous system, mainly in brain. In brain, it is highly expressed in the olfactory bulb and retina. In the developing olfactory bulb, it localizes along the dendrites of these cells as well as in their axons to some extent. In retina, it cocentrates in the inner plexiform layer throughout development (at protein level).

The protein localises to the membrane. In terms of biological role, may play a role in the interactions between neurites derived from specific subsets of neurons during development. In Mus musculus (Mouse), this protein is Protocadherin Fat 3 (Fat3).